We begin with the raw amino-acid sequence, 368 residues long: Alanine racemase (368 aa).

K40 (proton acceptor; specific for D-alanine) is an active-site residue. K40 carries the post-translational modification N6-(pyridoxal phosphate)lysine. R136 provides a ligand contact to substrate. The active-site Proton acceptor; specific for L-alanine is Y263. M310 is a binding site for substrate.

Belongs to the alanine racemase family. Pyridoxal 5'-phosphate serves as cofactor.

The enzyme catalyses L-alanine = D-alanine. It functions in the pathway amino-acid biosynthesis; D-alanine biosynthesis; D-alanine from L-alanine: step 1/1. Its function is as follows. Catalyzes the interconversion of L-alanine and D-alanine. May also act on other amino acids. In Streptococcus uberis (strain ATCC BAA-854 / 0140J), this protein is Alanine racemase (alr).